The chain runs to 297 residues: tRNA pseudouridine synthase A (297 aa).

The active-site Nucleophile is aspartate 72. Residue tyrosine 144 coordinates substrate.

This sequence belongs to the tRNA pseudouridine synthase TruA family. As to quaternary structure, homodimer.

It catalyses the reaction uridine(38/39/40) in tRNA = pseudouridine(38/39/40) in tRNA. Functionally, formation of pseudouridine at positions 38, 39 and 40 in the anticodon stem and loop of transfer RNAs. The polypeptide is tRNA pseudouridine synthase A (Mycobacterium bovis (strain ATCC BAA-935 / AF2122/97)).